The sequence spans 154 residues: Aspartate carbamoyltransferase regulatory chain (154 aa).

Zn(2+) contacts are provided by C111, C116, C139, and C142.

Belongs to the PyrI family. In terms of assembly, contains catalytic and regulatory chains. It depends on Zn(2+) as a cofactor.

In terms of biological role, involved in allosteric regulation of aspartate carbamoyltransferase. The chain is Aspartate carbamoyltransferase regulatory chain from Parabacteroides distasonis (strain ATCC 8503 / DSM 20701 / CIP 104284 / JCM 5825 / NCTC 11152).